The sequence spans 517 residues: Facilitated trehalose transporter Tret1 (517 aa).

At 1–56 the chain is on the cytoplasmic side; the sequence is MWIEIPECYEVLRNVFSKFRRHSLTAAMVKLLMRADTHVSFTVPAEEPVAKCTFSQ. Residues 57-77 form a helical membrane-spanning segment; it reads VLAALSVSLGSMVVGFSSAYT. At 78–100 the chain is on the extracellular side; it reads SPALVSMKDRNITSFEVTDQSGS. Asn-88 carries an N-linked (GlcNAc...) asparagine glycan. Residues 101 to 121 traverse the membrane as a helical segment; the sequence is WVGGIMPLAGLVGGILGGPLI. Over 122–135 the chain is Cytoplasmic; it reads EYLGRKNTILATAT. A helical membrane pass occupies residues 136-156; it reads PFIISWLLIACATHVAMVLVG. Residues 157 to 158 are Extracellular-facing; sequence RA. A helical transmembrane segment spans residues 159–179; it reads LSGFSVGVASLSLPVYLGETV. Residues 180-184 lie on the Cytoplasmic side of the membrane; the sequence is QPEVR. Residues 185–205 form a helical membrane-spanning segment; the sequence is GTLGLLPTAFGNIGILLCFVA. Over 206–212 the chain is Extracellular; it reads GNYMDWS. The chain crosses the membrane as a helical span at residues 213–233; it reads ELAFLGATLPVPFLILMFLIP. Residues 234–296 lie on the Cytoplasmic side of the membrane; that stretch reads ETPRWYVSRG…DLLKKTNLKP (63 aa). The chain crosses the membrane as a helical span at residues 297–317; it reads LLISLGLMFFQQLSGINAVIF. Residues 318–333 are Extracellular-facing; sequence YTVQIFQDAGSTIDEN. The chain crosses the membrane as a helical span at residues 334 to 354; it reads LCTIIVGVVNFIATFIATLLI. Residues 355 to 360 lie on the Cytoplasmic side of the membrane; that stretch reads DRLGRK. The helical transmembrane segment at 361-381 threads the bilayer; that stretch reads MLLYISDIAMIITLMTLGGFF. The Extracellular segment spans residues 382-392; sequence YVKNNGGDVSH. The chain crosses the membrane as a helical span at residues 393–413; the sequence is IGWLPLASFVIFVLGFSLGFG. The Cytoplasmic portion of the chain corresponds to 414–437; sequence PIPWLMMGEILPGKIRGSAASVAT. A helical transmembrane segment spans residues 438–458; the sequence is AFNWSCTFVVTKTFADIIASI. Topologically, residues 459–461 are extracellular; sequence GTH. Residues 462-482 form a helical membrane-spanning segment; the sequence is GAFWMFGSVCVVGLVFVIMYV. The Cytoplasmic portion of the chain corresponds to 483–517; it reads PETQGKSLEDIERKMCGRVRRMSSVANIKPLSFNM.

This sequence belongs to the major facilitator superfamily. Sugar transporter (TC 2.A.1.1) family. Trehalose transporter subfamily.

It localises to the cell membrane. Functionally, high-capacity facilitative transporter for trehalose. Does not transport maltose, sucrose or lactose. Mediates the bidirectional transfer of trehalose. Responsible for the transport of trehalose synthesized in the fat body and the incorporation of trehalose into other tissues that require a carbon source, thereby regulating trehalose levels in the hemolymph. The polypeptide is Facilitated trehalose transporter Tret1 (Culex quinquefasciatus (Southern house mosquito)).